Consider the following 444-residue polypeptide: Deoxyguanosinetriphosphate triphosphohydrolase-like protein (444 aa).

A disordered region spans residues 1 to 28; sequence MTDAVWNERRLGEDKQRRNDHRSPYQRD. The region spanning 59 to 250 is the HD domain; it reads RLTHSLEVSQ…MELADDIAYA (192 aa).

It belongs to the dGTPase family. Type 2 subfamily.

The chain is Deoxyguanosinetriphosphate triphosphohydrolase-like protein from Shewanella pealeana (strain ATCC 700345 / ANG-SQ1).